We begin with the raw amino-acid sequence, 375 residues long: Citrate synthase (375 aa).

Catalysis depends on residues H266 and D317.

This sequence belongs to the citrate synthase family. In terms of assembly, homohexamer.

The enzyme catalyses oxaloacetate + acetyl-CoA + H2O = citrate + CoA + H(+). The protein operates within carbohydrate metabolism; tricarboxylic acid cycle; isocitrate from oxaloacetate: step 1/2. Allosterically inhibited by NADH. This is Citrate synthase (gltA) from Mycolicibacterium smegmatis (Mycobacterium smegmatis).